The chain runs to 874 residues: Collagen alpha-2(I) chain (874 aa).

The tract at residues 1–874 (SGGFDFSFLP…FGYEGDFYRA (874 aa)) is disordered. 2 positions are modified to 4-hydroxyproline: Pro10 and Pro13. Lys16 carries the allysine modification. Over residues 27–66 (LMGPRGPPGASGAPGPQGFQGPAGEPGEPGQTGPAGARGP) the composition is skewed to low complexity. 2 positions are modified to 4-hydroxyproline: Pro34 and Pro40. Lys93 bears the 5-hydroxylysine; alternate mark. Lys93 carries O-linked (Gal...) hydroxylysine; alternate glycosylation. Low complexity-rich tracts occupy residues 110–143 (ARGRVGAPGPAGARGSDGSVGPVGPAGPIGSAGP), 188–209 (PGANGLTGAKGAAGLPGVAGAP), and 218–236 (PGPVGARGLVGEPGPAGSK). Gly residues predominate over residues 237-246 (GESGGKGEPG). The segment covering 247-257 (SAGPQGPPGSS) has biased composition (low complexity). 4-hydroxyproline is present on residues Pro317 and Pro320. 3 stretches are compositionally biased toward low complexity: residues 346–365 (LPGIDGRPGPIGPAGARGEA), 434–451 (PGESGAVGPSGAIGSRGP), and 463–473 (EPGVVGAPGTA). Residues 474-483 (GPAGSGGLPG) are compositionally biased toward gly residues. Low complexity-rich tracts occupy residues 491 to 538 (RGEV…PRGS) and 545 to 565 (VGPAGPNGFAGPAGAAGQPGA). Residues 566-575 (KGERGTKGPK) show a composition bias toward basic and acidic residues. Positions 583–593 (PTGPVGSAGPA) are enriched in low complexity. Residues 603-612 (GSRGDGGPPG) show a composition bias toward gly residues. Low complexity predominate over residues 614-623 (TGFPGAAGRT). Gly residues predominate over residues 648 to 662 (GPVGRGETGAGGPPG). Low complexity-rich tracts occupy residues 663–697 (FTGEKGPSGEPGTAGPPGTAGPQGLLGAPGILGLP) and 705–724 (LPGVAGAVGEPGPLGIAGPP). Positions 725-744 (GARGDGNPGSDGPPGRGAAG) are enriched in gly residues. Low complexity-rich tracts occupy residues 745-755 (APGPHGTVGPA) and 763-778 (EPGPVGSVGPVGALGP).

The protein belongs to the fibrillar collagen family. In terms of assembly, trimers of one alpha 2(I) and two alpha 1(I) chains. Interacts (via C-terminus) with TMEM131 (via PapD-L domain); the interaction is direct and is involved in assembly and TRAPPIII ER-to-Golgi transport complex-dependent secretion of collagen. In terms of processing, prolines at the third position of the tripeptide repeating unit (G-X-Y) are hydroxylated in some or all of the chains. In terms of tissue distribution, expressed in bones.

It is found in the secreted. It localises to the extracellular space. The protein resides in the extracellular matrix. Functionally, type I collagen is a member of group I collagen (fibrillar forming collagen). The polypeptide is Collagen alpha-2(I) chain (Megalonyx jeffersonii (Jefferson's ground sloth)).